The chain runs to 208 residues: RxLR effector protein Avr1 (208 aa).

Residues 1–22 (MGLMHRVLLLATFALLCMHAKA) form the signal peptide. The RxLR-dEER motif lies at 41-54 (RQLRTATMSDDEAR). A W1-motif region spans residues 70 to 92 (KIESWIQNKVTDDFVLSELKLVR). The segment at 93–110 (LPGTSLADDPNFKLFQKF) is linker region ln1. The W2-motif stretch occupies residues 111-136 (KIGGWLEEKATTTKAWENLGLDSLPF). The segment at 137–157 (DQVSKIDEFKTYTQYVTVLNK) is Y-motif. The interval 158-170 (KASKLDIDQWHGL) is linker region ln2. A T-region region spans residues 170-208 (LLSGGSPEELMAKAMILRTLGRDVLERRVMLGGHVVVPF).

Belongs to the RxLR effector family. In terms of assembly, interacts with host exocyst component Sec5.

It is found in the secreted. It localises to the host cytoplasm. The protein localises to the host nucleus. The protein resides in the host peroxisome. Secreted effector that acts as an elicitor of hypersensitive response (HR) specifically on plants carrying defense protein R1, through its interaction with this protein. Also acts as a virulence factor that promotes colonization and suppresses cell death induced by CRN2 as well as callose deposition, a hallmark of basal defense. Interacts with host exocyst component Sec5 and thereby disturbs vesicle trafficking, a cellular process that is important for basal defense. By targeting and stabilizing Sec5 in the cytoplasm, the exocyst complex is thus out of balance and not able to mediate the focal secretion of PR-1 and callose. The sequence is that of RxLR effector protein Avr1 from Phytophthora infestans (strain T30-4) (Potato late blight agent).